Consider the following 293-residue polypeptide: Forkhead box protein N5 (293 aa).

The segment at Thr-104–Arg-152 is disordered. Over residues Pro-106–Ser-119 the composition is skewed to polar residues. Positions Arg-176–Leu-273 form a DNA-binding region, fork-head.

The protein resides in the nucleus. The protein is Forkhead box protein N5 of Xenopus tropicalis (Western clawed frog).